The chain runs to 179 residues: MHAGEAVQQLKKAFETVASFDFRDALSKASTPVTVVATNGPFGLAGLTCSAVCSVCDRPPTVLLCINRKSYAAGIIKSNGVLSVNWLAAGQAVISQTFAGVGSVPMEERFADKGWQTIATGAPYRMDAAVSFDCTIANIVDVGSHSVIFAEVVARNHAEECTPLIYHRRQYATTRSLAE.

48–51 is a binding site for FAD; it reads TCSA. Residue 54–57 coordinates NAD(+); sequence SVCD. FAD contacts are provided by residues 65-71, Ala-99, 104-109, and Ser-144; these read CINRKSY and VPMEER. NAD(+)-binding positions include His-145 and 166-169; that span reads YHRR. Tyr-166 contributes to the FAD binding site.

Belongs to the non-flavoprotein flavin reductase family. In terms of assembly, homodimer. The chlorophenol-4-monooxygenase is composed of an oxygenase component TftD and a reductase component TftC.

The enzyme catalyses FADH2 + NAD(+) = FAD + NADH + 2 H(+). Its pathway is xenobiotic degradation. Its function is as follows. Reductase component of a two-component system that degrades 2,4,5-trichlorophenol. TftC provides the FADH(2) required by TftD. TftD oxidizes 2,4,5-trichlorophenol (2,4,5-TCP) to 2,5-dichloro-p-benzoquinone, which is chemically reduced to 2,5-dichloro-p-hydroquinone (2,5-DiCHQ). Then, TftD oxidizes the latter to 5-chloro-2-hydroxy-p-benzoquinone. The sequence is that of NADH:FAD oxidoreductase (tftC) from Burkholderia cepacia (Pseudomonas cepacia).